A 169-amino-acid chain; its full sequence is Cell division inhibitor SulA (169 aa).

The segment at 106–112 (ALRTGNY) is ftsZ binding. Residues 162-169 (KIHSNLYH) are lon protease binding.

The protein belongs to the SulA family. As to quaternary structure, interacts with FtsZ. Post-translationally, is rapidly cleaved and degraded by the Lon protease once DNA damage is repaired.

Component of the SOS system and an inhibitor of cell division. Accumulation of SulA causes rapid cessation of cell division and the appearance of long, non-septate filaments. In the presence of GTP, binds a polymerization-competent form of FtsZ in a 1:1 ratio, thus inhibiting FtsZ polymerization and therefore preventing it from participating in the assembly of the Z ring. This mechanism prevents the premature segregation of damaged DNA to daughter cells during cell division. This is Cell division inhibitor SulA from Escherichia coli O7:K1 (strain IAI39 / ExPEC).